Reading from the N-terminus, the 213-residue chain is Redox-sensing transcriptional repressor Rex (213 aa).

The H-T-H motif DNA-binding region spans 17-56 (LYYRIFKRFYADQVEKASSKQIADAMGIDSATVRRDFSYF). 91-96 (GCGNIG) contacts NAD(+).

It belongs to the transcriptional regulatory Rex family. In terms of assembly, homodimer.

The protein resides in the cytoplasm. In terms of biological role, modulates transcription in response to changes in cellular NADH/NAD(+) redox state. In Streptococcus uberis (strain ATCC BAA-854 / 0140J), this protein is Redox-sensing transcriptional repressor Rex.